A 430-amino-acid polypeptide reads, in one-letter code: Spermatogenic leucine zipper protein 1 (430 aa).

A disordered region spans residues 1-25 (MASSAKSAEMPTISKTVNPTPDPHQ). A coiled-coil region spans residues 62–102 (EQQTAQKFNNLLKEIKDILKNMAGFEEKITEAKELFEETNI). A Phosphoserine modification is found at Ser107. Residues 166 to 177 (KINEMLSTNLPV) form a helix-loop-helix motif region. A basic motif region spans residues 178-244 (SLAPEKEDNE…NVQEETMKIR (67 aa)). Coiled coils occupy residues 214-269 (LEEK…KLIK) and 316-351 (SLQL…TLQE). Ser258 is modified (phosphoserine). The segment at 303–324 (LEEQVKKLSHDTYSLQLMAALL) is leucine-zipper.

In terms of assembly, interacts with PPP1CC isoform gamma-2. Post-translationally, phosphorylated by MAPK1/ERK2 and MAPK3/ERK1. Specifically and strongly expressed in the testis. Expressed in several tumor cell lines.

It is found in the cytoplasm. It localises to the nucleus. Its function is as follows. Transcription factor that binds to the DNA sequence 5'-CANNTG-3'(E box) and the G-box motif. May play an important role in the regulation of cell proliferation and differentiation during spermatogenesis. In Homo sapiens (Human), this protein is Spermatogenic leucine zipper protein 1 (SPZ1).